The following is a 552-amino-acid chain: Phosphoglucomutase (552 aa).

Ser-143 acts as the Phosphoserine intermediate in catalysis. Mg(2+) contacts are provided by Ser-143, Asp-295, Asp-297, and Asp-299.

The protein belongs to the phosphohexose mutase family. Mg(2+) is required as a cofactor.

It carries out the reaction alpha-D-glucose 1-phosphate = alpha-D-glucose 6-phosphate. It participates in glycolipid metabolism; diglucosyl-diacylglycerol biosynthesis. Functionally, catalyzes the interconversion between glucose-6-phosphate and alpha-glucose-1-phosphate. This is the first step in the biosynthesis of diglucosyl-diacylglycerol (Glc2-DAG), i.e. the predominant glycolipid found in the S.aureus membrane, which is also used as a membrane anchor for lipoteichoic acid (LTA). This Staphylococcus aureus (strain MRSA252) protein is Phosphoglucomutase (pgcA).